Here is a 320-residue protein sequence, read N- to C-terminus: Methenyltetrahydromethanopterin cyclohydrolase (320 aa).

The protein belongs to the MCH family.

The protein localises to the cytoplasm. The catalysed reaction is 5,10-methenyl-5,6,7,8-tetrahydromethanopterin + H2O = N(5)-formyl-5,6,7,8-tetrahydromethanopterin + H(+). Its pathway is one-carbon metabolism; methanogenesis from CO(2); 5,10-methenyl-5,6,7,8-tetrahydromethanopterin from CO(2): step 3/3. Its function is as follows. Catalyzes the reversible interconversion of 5-formyl-H(4)MPT to methenyl-H(4)MPT(+). This is Methenyltetrahydromethanopterin cyclohydrolase (mch) from Methanothermobacter thermautotrophicus (strain ATCC 29096 / DSM 1053 / JCM 10044 / NBRC 100330 / Delta H) (Methanobacterium thermoautotrophicum).